An 82-amino-acid polypeptide reads, in one-letter code: uncharacterized protein (82 aa).

The span at 1–11 shows a compositional bias: basic and acidic residues; that stretch reads MKARGSRENAS. Positions 1–25 are disordered; the sequence is MKARGSRENASKRRPSQTQYDTHLR. Positions 16–25 are enriched in polar residues; that stretch reads SQTQYDTHLR.

This is an uncharacterized protein from Human cytomegalovirus (strain AD169) (HHV-5).